Consider the following 1263-residue polypeptide: Valine--tRNA ligase (1263 aa).

An N-acetylserine modification is found at Ser-2. The region spanning 89 to 219 (GSRAAVLVQQ…YSGARSVTQQ (131 aa)) is the GST C-terminal domain. The tract at residues 218 to 294 (QQPGSEVIAP…PGEKKDVSGA (77 aa)) is disordered. 2 stretches are compositionally biased toward basic and acidic residues: residues 234 to 248 (LKKEAKKREKLEKFQ) and 259 to 274 (HGEKKPKPEKKEKRDP). Residues 343–353 (PNVTGSLHLGH) carry the 'HIGH' region motif. Ser-436 and Ser-526 each carry phosphoserine. Residue Lys-644 is modified to N6-acetyllysine. Positions 861 to 865 (KMSKS) match the 'KMSKS' region motif. Position 864 (Lys-864) interacts with ATP.

The protein belongs to the class-I aminoacyl-tRNA synthetase family. In terms of assembly, forms high-molecular-mass aggregates with elongation factor 1.

The catalysed reaction is tRNA(Val) + L-valine + ATP = L-valyl-tRNA(Val) + AMP + diphosphate. Can be regulated by protein kinase C-dependent phosphorylation. This chain is Valine--tRNA ligase (Vars1), found in Mus musculus (Mouse).